The chain runs to 292 residues: Homoserine kinase (292 aa).

An ATP-binding site is contributed by 84 to 94 (PLSRGLGSSSA).

The protein belongs to the GHMP kinase family. Homoserine kinase subfamily.

It localises to the cytoplasm. The enzyme catalyses L-homoserine + ATP = O-phospho-L-homoserine + ADP + H(+). The protein operates within amino-acid biosynthesis; L-threonine biosynthesis; L-threonine from L-aspartate: step 4/5. Its function is as follows. Catalyzes the ATP-dependent phosphorylation of L-homoserine to L-homoserine phosphate. The protein is Homoserine kinase of Campylobacter jejuni subsp. jejuni serotype O:2 (strain ATCC 700819 / NCTC 11168).